The sequence spans 250 residues: Anti-sigma-L factor RslA (250 aa).

At 1-115 the chain is on the cytoplasmic side; that stretch reads MTMPLRGLGP…VHRRRRRTRL (115 aa). The chain crosses the membrane as a helical span at residues 116 to 136; sequence ITWVASSAAAAVLAIGVLVGV. Residues 137–250 are Extracellular-facing; sequence QGHSAAPQRA…TGQVLLQRSL (114 aa).

Interacts with ECF RNA polymerase sigma factor SigL; this should inhibit the interaction of SigL with the RNA polymerase catalytic core. Post-translationally, probably cleaved within the membrane by Rip1 near the cytoplasmic membrane interface.

It localises to the cell membrane. An anti-sigma factor for extracytoplasmic function (ECF) sigma factor SigL. ECF sigma factors are held in an inactive form by an anti-sigma factor until released by regulated intramembrane proteolysis (RIP). RIP occurs when an extracytoplasmic signal triggers a concerted proteolytic cascade to transmit information and elicit cellular responses. The membrane-spanning regulatory substrate protein is first cut extracytoplasmically (site-1 protease, S1P), then within the membrane itself (site-2 protease, S2P, Rip1), while cytoplasmic proteases finish degrading the regulatory protein, liberating the sigma factor. This Mycobacterium tuberculosis (strain ATCC 35801 / TMC 107 / Erdman) protein is Anti-sigma-L factor RslA (rslA).